The following is a 713-amino-acid chain: Cyclomaltodextrin glucanotransferase (713 aa).

The signal sequence occupies residues 1-27; the sequence is MKRFMKLTAVWTLWLSLTLGLLSPVHA. Residues 28–165 form an A1 region; that stretch reads APDTSVSNKQ…NIKVIIDFAP (138 aa). Asp54, Asn56, Asn59, and Asn60 together coordinate Ca(2+). The cysteines at positions 70 and 77 are disulfide-linked. Gly78 and Asp80 together coordinate Ca(2+). 127 to 128 lines the substrate pocket; the sequence is YW. Asn166 lines the Ca(2+) pocket. The b stretch occupies residues 166-229; sequence NHTSPASSDD…NLYDLADLNH (64 aa). His167 contributes to the substrate binding site. Ca(2+) is bound at residue Ile217. 220–223 contributes to the substrate binding site; sequence NLYD. Residue Asp226 coordinates Ca(2+). The tract at residues 230–433 is A2; the sequence is NNSSVDVYLK…LRKSNPAIAY (204 aa). A substrate-binding site is contributed by Arg254. The active-site Nucleophile is Asp256. Substrate is bound at residue 259 to 260; that stretch reads KH. His260 contacts Ca(2+). Glu284 serves as the catalytic Proton donor. Substrate is bound by residues His354, Asp398, and Arg402. The c stretch occupies residues 434–522; sequence GSTHERWINN…GTAVWQYTTD (89 aa). The tract at residues 523-609 is d; the sequence is ATTPIIGNVG…SNIYDNFEVL (87 aa). The region spanning 526–607 is the IPT/TIG domain; it reads PIIGNVGPMM…AASNIYDNFE (82 aa). In terms of domain architecture, CBM20 spans 608–713; it reads VLTGDQVTVR…TATVNVNWQP (106 aa). The interval 610–713 is e; it reads TGDQVTVRFV…TATVNVNWQP (104 aa).

Belongs to the glycosyl hydrolase 13 family. Monomer. Ca(2+) serves as cofactor.

The protein localises to the secreted. The enzyme catalyses Cyclizes part of a (1-&gt;4)-alpha-D-glucan chain by formation of a (1-&gt;4)-alpha-D-glucosidic bond.. This Bacillus sp. (strain 1011) protein is Cyclomaltodextrin glucanotransferase (cgt).